The chain runs to 347 residues: Endophilin-A3 (347 aa).

The segment at 1–21 is membrane-binding amphipathic helix; that stretch reads MSVAGLKKQFHKASQLFSEKI. In terms of domain architecture, BAR spans 18–249; that stretch reads SEKISGAEGT…LQMRISAASS (232 aa). Residues 60-87 form a required for dimerization upon membrane association region; that stretch reads PNPAYRAKLGMLNTVSKIRGQVKTTGYP. Positions 181–201 form a coiled coil; the sequence is EEVRQAVEKFEESKELAERSM. The tract at residues 218–254 is interaction with ARC; it reads FIEAALDYHRQSTEILQELQSKLQMRISAASSVPRRE. The tract at residues 248–271 is disordered; sequence SSVPRREYKPRPVKRSSSELNGVS. Position 265 is a phosphoserine (serine 265). In terms of domain architecture, SH3 spans 285–344; the sequence is MDQPCCRGLYDFEPENQGELGFKEGDIITLTNQIDENWYEGMIHGESGFFPINYVEVIVP.

The protein belongs to the endophilin family. In terms of assembly, interacts with ARC. Interacts with DNM1, SGIP1 and SYNJ1. Interacts with the huntingtin exon 1 protein (HDEX1P) containing a glutamine repeat in the pathological range and promotes formation of insoluble polyglutamine-containing aggregates in vivo. Interacts with DYDC1. Interacts with FASLG. Interacts with ATXN2. Interacts with BIN2. As to expression, brain and testis.

It localises to the cytoplasm. The protein resides in the early endosome membrane. Functionally, implicated in endocytosis. May recruit other proteins to membranes with high curvature. This is Endophilin-A3 (SH3GL3) from Homo sapiens (Human).